Consider the following 145-residue polypeptide: Nucleoside diphosphate kinase (145 aa).

The ATP site is built by Lys11, Phe59, Arg87, Thr93, Arg104, and Asn114. Catalysis depends on His117, which acts as the Pros-phosphohistidine intermediate.

Belongs to the NDK family. In terms of assembly, homotetramer. Requires Mg(2+) as cofactor.

Its subcellular location is the cytoplasm. The catalysed reaction is a 2'-deoxyribonucleoside 5'-diphosphate + ATP = a 2'-deoxyribonucleoside 5'-triphosphate + ADP. It catalyses the reaction a ribonucleoside 5'-diphosphate + ATP = a ribonucleoside 5'-triphosphate + ADP. Its function is as follows. Major role in the synthesis of nucleoside triphosphates other than ATP. The ATP gamma phosphate is transferred to the NDP beta phosphate via a ping-pong mechanism, using a phosphorylated active-site intermediate. This Myxococcus xanthus protein is Nucleoside diphosphate kinase.